The following is a 138-amino-acid chain: uncharacterized protein (138 aa).

Ser110 carries the post-translational modification Phosphoserine.

It is found in the cytoplasm. The protein localises to the nucleus. This is an uncharacterized protein from Schizosaccharomyces pombe (strain 972 / ATCC 24843) (Fission yeast).